Reading from the N-terminus, the 100-residue chain is NADH-quinone oxidoreductase subunit K (100 aa).

3 helical membrane-spanning segments follow: residues 4–24 (LSYSLSLAAILFMLGLTGIMI), 29–49 (LFLLLGLEIMINAAALAFVIV), and 60–80 (VMYILTVTIAATEASIGLALL).

This sequence belongs to the complex I subunit 4L family. In terms of assembly, NDH-1 is composed of 14 different subunits. Subunits NuoA, H, J, K, L, M, N constitute the membrane sector of the complex.

The protein localises to the cell membrane. The enzyme catalyses a quinone + NADH + 5 H(+)(in) = a quinol + NAD(+) + 4 H(+)(out). NDH-1 shuttles electrons from NADH, via FMN and iron-sulfur (Fe-S) centers, to quinones in the respiratory chain. The immediate electron acceptor for the enzyme in this species is believed to be ubiquinone. Couples the redox reaction to proton translocation (for every two electrons transferred, four hydrogen ions are translocated across the cytoplasmic membrane), and thus conserves the redox energy in a proton gradient. This is NADH-quinone oxidoreductase subunit K from Baumannia cicadellinicola subsp. Homalodisca coagulata.